Consider the following 563-residue polypeptide: Arginine--tRNA ligase (563 aa).

A 'HIGH' region motif is present at residues 121–131 (PNIAKPFSIGH).

The protein belongs to the class-I aminoacyl-tRNA synthetase family. Monomer.

It is found in the cytoplasm. The enzyme catalyses tRNA(Arg) + L-arginine + ATP = L-arginyl-tRNA(Arg) + AMP + diphosphate. The protein is Arginine--tRNA ligase of Streptococcus thermophilus (strain ATCC BAA-250 / LMG 18311).